The chain runs to 335 residues: Fructose-1,6-bisphosphatase class 1 (335 aa).

Glutamate 90, aspartate 112, leucine 114, and aspartate 115 together coordinate Mg(2+). Residues 115-118, asparagine 210, and lysine 276 each bind substrate; that span reads DGSS. Glutamate 282 contacts Mg(2+).

This sequence belongs to the FBPase class 1 family. In terms of assembly, homotetramer. The cofactor is Mg(2+).

The protein resides in the cytoplasm. It catalyses the reaction beta-D-fructose 1,6-bisphosphate + H2O = beta-D-fructose 6-phosphate + phosphate. It participates in carbohydrate biosynthesis; gluconeogenesis. In Ectopseudomonas mendocina (strain ymp) (Pseudomonas mendocina), this protein is Fructose-1,6-bisphosphatase class 1.